Here is a 198-residue protein sequence, read N- to C-terminus: Ribonuclease HII (198 aa).

In terms of domain architecture, RNase H type-2 spans 14-198 (HMIVGVDEAG…FAPVAQLQLV (185 aa)). A divalent metal cation contacts are provided by Asp-20, Glu-21, and Asp-110.

Belongs to the RNase HII family. The cofactor is Mn(2+). Requires Mg(2+) as cofactor.

The protein localises to the cytoplasm. The enzyme catalyses Endonucleolytic cleavage to 5'-phosphomonoester.. In terms of biological role, endonuclease that specifically degrades the RNA of RNA-DNA hybrids. The sequence is that of Ribonuclease HII from Sphingopyxis alaskensis (strain DSM 13593 / LMG 18877 / RB2256) (Sphingomonas alaskensis).